Reading from the N-terminus, the 456-residue chain is uncharacterized protein (456 aa).

A run of 11 helical transmembrane segments spans residues 12-32 (SFIWGAPLLILLSGTGLYLTL), 63-83 (FAALCTALAATIGTGNIVGVA), 86-106 (VQAGGPGAIFWMWLVALLGMA), 143-163 (WLAKLFALFGVMVAFFGIGTF), 179-199 (IPVLVTAIIVTLLVGLIILGG), 208-228 (SVIVPFMAILYVTTSLVIILL), 237-257 (ILLIIDSAFDPQAALGGAVGL), 305-325 (FLDTIIVCTMTGIVLVLTGAW), 348-368 (IGATIVTVGLLFFAFTTILGW), 390-410 (LAYIMLVGLGAFLHLNLIWII), and 414-434 (VNGLMAFPNLIALIGLRKVII).

Belongs to the alanine or glycine:cation symporter (AGCS) (TC 2.A.25) family.

It localises to the cell inner membrane. This is an uncharacterized protein from Haemophilus influenzae (strain ATCC 51907 / DSM 11121 / KW20 / Rd).